The sequence spans 140 residues: Small ribosomal subunit protein uS11 (140 aa).

Residues 116–140 (GRVEDVTPIPHDGTRPKGGRRGRRV) are disordered.

This sequence belongs to the universal ribosomal protein uS11 family. In terms of assembly, part of the 30S ribosomal subunit.

Located on the platform of the 30S subunit. In Thermococcus kodakarensis (strain ATCC BAA-918 / JCM 12380 / KOD1) (Pyrococcus kodakaraensis (strain KOD1)), this protein is Small ribosomal subunit protein uS11.